Reading from the N-terminus, the 628-residue chain is Glutamine--fructose-6-phosphate aminotransferase [isomerizing] (628 aa).

The Nucleophile; for GATase activity role is filled by cysteine 2. The 228-residue stretch at 2–229 folds into the Glutamine amidotransferase type-2 domain; sequence CGIVGYVGHR…QDQAVVLTAD (228 aa). Positions 61-94 are disordered; the sequence is ETDSNDGDGLGGSTGLGHTRWATHGRPTDRNAHP. 2 SIS domains span residues 301–440 and 473–618; these read SDQE…ARGT and LAER…VDKP. Lysine 623 serves as the catalytic For Fru-6P isomerization activity.

Homodimer.

It is found in the cytoplasm. The catalysed reaction is D-fructose 6-phosphate + L-glutamine = D-glucosamine 6-phosphate + L-glutamate. Its function is as follows. Catalyzes the first step in hexosamine metabolism, converting fructose-6P into glucosamine-6P using glutamine as a nitrogen source. The chain is Glutamine--fructose-6-phosphate aminotransferase [isomerizing] from Mycolicibacterium smegmatis (strain ATCC 700084 / mc(2)155) (Mycobacterium smegmatis).